Here is a 479-residue protein sequence, read N- to C-terminus: Ribosomal RNA small subunit methyltransferase F (479 aa).

S-adenosyl-L-methionine contacts are provided by residues 125–131 (AAAPGSK), Glu-149, Asp-176, and Asp-194. Residue Cys-247 is the Nucleophile of the active site.

The protein belongs to the class I-like SAM-binding methyltransferase superfamily. RsmB/NOP family.

It localises to the cytoplasm. The catalysed reaction is cytidine(1407) in 16S rRNA + S-adenosyl-L-methionine = 5-methylcytidine(1407) in 16S rRNA + S-adenosyl-L-homocysteine + H(+). Functionally, specifically methylates the cytosine at position 1407 (m5C1407) of 16S rRNA. This is Ribosomal RNA small subunit methyltransferase F from Salmonella agona (strain SL483).